A 276-amino-acid polypeptide reads, in one-letter code: Halorhodopsin (276 aa).

A propeptide spanning residues 1-20 (MTAASTTATTVLQATQSDVL) is cleaved from the precursor. Position 21 is a pyrrolidone carboxylic acid (glutamine 21). Helical transmembrane passes span 31–51 (SSIW…VAMG), 61–81 (LIWV…AGLA), 109–129 (YLTW…LADT), 134–154 (LFTA…AALI), 162–182 (WVFY…LLVQ), 195–215 (IFGT…ILWA), and 220–240 (GVAL…DILA). An N6-(retinylidene)lysine modification is found at lysine 241.

The protein belongs to the archaeal/bacterial/fungal opsin family. Post-translationally, the covalent binding of retinal to the apoprotein, bacterioopsin, generates bacteriorhodopsin.

It is found in the membrane. In terms of biological role, light-driven chloride pump. This Haloarcula marismortui (strain ATCC 43049 / DSM 3752 / JCM 8966 / VKM B-1809) (Halobacterium marismortui) protein is Halorhodopsin (hop).